The primary structure comprises 215 residues: MSKVYDWFEERLEIQAIADDITSKYVPPHVNIFYCLGGITLTCFLVQVATGFAMTFYYRPTVTEAFASVQYIMTEANFGWLIRSVHRWSASMMVLMMILHVFRVYLTGGFKKPRELTWVTGVILAVLTASFGVTGYSLPWDQIGYWAVKIVTGVPEAIPVIGSPLVELLRGSTSVGQSTLTRFYSLHTFVLPLLTAVFMLMHFSMIRKQGISGPL.

Residues 32–52 form a helical membrane-spanning segment; the sequence is IFYCLGGITLTCFLVQVATGF. Residue Cys35 participates in heme c binding. 2 residues coordinate heme b: His86 and His100. Helical transmembrane passes span 90 to 110, 116 to 136, and 186 to 206; these read ASMM…TGGF, LTWV…VTGY, and LHTF…FSMI. Positions 187 and 202 each coordinate heme b.

It belongs to the cytochrome b family. PetB subfamily. In terms of assembly, the 4 large subunits of the cytochrome b6-f complex are cytochrome b6, subunit IV (17 kDa polypeptide, PetD), cytochrome f and the Rieske protein, while the 4 small subunits are PetG, PetL, PetM and PetN. The complex functions as a dimer. The cofactor is heme b. Heme c is required as a cofactor.

It localises to the plastid. The protein resides in the chloroplast thylakoid membrane. Its function is as follows. Component of the cytochrome b6-f complex, which mediates electron transfer between photosystem II (PSII) and photosystem I (PSI), cyclic electron flow around PSI, and state transitions. In Piper cenocladum (Ant piper), this protein is Cytochrome b6.